The sequence spans 313 residues: Ribosomal RNA small subunit methyltransferase H (313 aa).

S-adenosyl-L-methionine-binding positions include 35–37, Asp55, Phe79, Asp101, and Gln108; that span reads GGH.

The protein belongs to the methyltransferase superfamily. RsmH family.

The protein resides in the cytoplasm. The catalysed reaction is cytidine(1402) in 16S rRNA + S-adenosyl-L-methionine = N(4)-methylcytidine(1402) in 16S rRNA + S-adenosyl-L-homocysteine + H(+). Specifically methylates the N4 position of cytidine in position 1402 (C1402) of 16S rRNA. The chain is Ribosomal RNA small subunit methyltransferase H from Salmonella arizonae (strain ATCC BAA-731 / CDC346-86 / RSK2980).